A 66-amino-acid polypeptide reads, in one-letter code: Heat-stable enterotoxin (66 aa).

The signal sequence occupies residues 1 to 19; it reads MKKIVFVLVLMLSSFGTFG. A propeptide spanning residues 20–50 is cleaved from the precursor; sequence QETASRQFGDAFSTPIAAEVNKKACDTELPP. Intrachain disulfides connect C54–C59, C55–C63, and C58–C66.

This sequence belongs to the heat-stable enterotoxin family.

Its subcellular location is the secreted. Functionally, toxin which activates the particulate form of guanylate cyclase and increases cyclic GMP levels within the host intestinal epithelial cells. The protein is Heat-stable enterotoxin (yst) of Yersinia kristensenii.